Reading from the N-terminus, the 194-residue chain is Fe/S biogenesis protein NfuA (194 aa).

[4Fe-4S] cluster is bound by residues Cys152 and Cys155.

It belongs to the NfuA family. Homodimer. [4Fe-4S] cluster serves as cofactor.

Functionally, involved in iron-sulfur cluster biogenesis. Binds a 4Fe-4S cluster, can transfer this cluster to apoproteins, and thereby intervenes in the maturation of Fe/S proteins. Could also act as a scaffold/chaperone for damaged Fe/S proteins. The polypeptide is Fe/S biogenesis protein NfuA (Stutzerimonas stutzeri (strain A1501) (Pseudomonas stutzeri)).